A 629-amino-acid polypeptide reads, in one-letter code: Phosphatidylinositol-3,5-bisphosphate 3-phosphatase MTMR8 (629 aa).

In terms of domain architecture, Myotubularin phosphatase spans 126 to 500 (GWKLIDLKVD…FSFQFWCGMY (375 aa)). Residues Asn-250, Asn-275, and Ile-276 each contribute to the a 1,2-diacyl-sn-glycero-3-phospho-(1D-myo-inositol-3,5-bisphosphate) site. A 1,2-diacyl-sn-glycero-3-phospho-(1D-myo-inositol-3-phosphate) is bound by residues Asn-250, Asn-275, and Ile-276. Cys-338 functions as the Phosphocysteine intermediate in the catalytic mechanism. Residues Ser-339, Asp-340, Gly-341, Trp-342, Asp-343, Arg-344, Lys-380, and Arg-384 each contribute to the a 1,2-diacyl-sn-glycero-3-phospho-(1D-myo-inositol-3,5-bisphosphate) site. Residues Ser-339, Asp-340, Gly-341, Trp-342, Asp-343, and Arg-344 each coordinate a 1,2-diacyl-sn-glycero-3-phospho-(1D-myo-inositol-3-phosphate). Phosphate-binding residues include Ser-339 and Asp-340. Residues Trp-342, Asp-343, and Arg-344 each contribute to the phosphate site. Arg-384 is an a 1,2-diacyl-sn-glycero-3-phospho-(1D-myo-inositol-3-phosphate) binding site. Residues 517–543 (LLSCMNQKIKLEDNASELENKLPFLDG) are a coiled coil.

Belongs to the protein-tyrosine phosphatase family. Non-receptor class myotubularin subfamily. As to quaternary structure, homodimer.

Its subcellular location is the nucleus envelope. It carries out the reaction a 1,2-diacyl-sn-glycero-3-phospho-(1D-myo-inositol-3,5-bisphosphate) + H2O = a 1,2-diacyl-sn-glycero-3-phospho-(1D-myo-inositol-5-phosphate) + phosphate. It catalyses the reaction a 1,2-diacyl-sn-glycero-3-phospho-(1D-myo-inositol-3-phosphate) + H2O = a 1,2-diacyl-sn-glycero-3-phospho-(1D-myo-inositol) + phosphate. The enzyme catalyses 1,2-dioctanoyl-sn-glycero-3-phospho-(1D-myo-inositol-3,5-bisphosphate) + H2O = 1,2-dioctanoyl-sn-glycero-3-phospho-(1D-myo-inositol-5-phosphate) + phosphate. Its function is as follows. Lipid phosphatase that specifically dephosphorylates the D-3 position of phosphatidylinositol 3-phosphate and phosphatidylinositol 3,5-bisphosphate, generating phosphatidylinositol and phosphatidylinositol 5-phosphate. This is Phosphatidylinositol-3,5-bisphosphate 3-phosphatase MTMR8 from Gallus gallus (Chicken).